The sequence spans 237 residues: DNA repair protein RecO (237 aa).

It belongs to the RecO family.

Functionally, involved in DNA repair and RecF pathway recombination. The polypeptide is DNA repair protein RecO (Cereibacter sphaeroides (strain ATCC 17025 / ATH 2.4.3) (Rhodobacter sphaeroides)).